The chain runs to 148 residues: uncharacterized protein (148 aa).

It belongs to the serpin family. Poxviruses subfamily.

This is an uncharacterized protein from Fowlpox virus (strain NVSL) (FPV).